The chain runs to 525 residues: GMP synthase [glutamine-hydrolyzing] (525 aa).

The Glutamine amidotransferase type-1 domain maps to P8 to D206. The active-site Nucleophile is the C85. Active-site residues include H180 and E182. The GMPS ATP-PPase domain occupies W207 to R400. S234–S240 contributes to the ATP binding site.

As to quaternary structure, homodimer.

The catalysed reaction is XMP + L-glutamine + ATP + H2O = GMP + L-glutamate + AMP + diphosphate + 2 H(+). It participates in purine metabolism; GMP biosynthesis; GMP from XMP (L-Gln route): step 1/1. Its function is as follows. Catalyzes the synthesis of GMP from XMP. This Legionella pneumophila (strain Lens) protein is GMP synthase [glutamine-hydrolyzing].